A 1340-amino-acid chain; its full sequence is DNA-directed RNA polymerase subunit beta (1340 aa).

The protein belongs to the RNA polymerase beta chain family. The RNAP catalytic core consists of 2 alpha, 1 beta, 1 beta' and 1 omega subunit. When a sigma factor is associated with the core the holoenzyme is formed, which can initiate transcription.

The catalysed reaction is RNA(n) + a ribonucleoside 5'-triphosphate = RNA(n+1) + diphosphate. Functionally, DNA-dependent RNA polymerase catalyzes the transcription of DNA into RNA using the four ribonucleoside triphosphates as substrates. The chain is DNA-directed RNA polymerase subunit beta from Baumannia cicadellinicola subsp. Homalodisca coagulata.